Consider the following 301-residue polypeptide: Mas-related G-protein coupled receptor member A6 (301 aa).

Over 1 to 15 the chain is Extracellular; the sequence is MHRSISIRILITNLM. Residues 16 to 36 form a helical membrane-spanning segment; sequence IVILGLVGLTGNAIVFWLLLF. Over 37 to 42 the chain is Cytoplasmic; the sequence is RLRRNA. The chain crosses the membrane as a helical span at residues 43-63; sequence FSIYILNLALADFLFLLCHII. Over 64–77 the chain is Extracellular; it reads ASTEHILTFSSPNS. Residues 78 to 98 form a helical membrane-spanning segment; sequence IFINCLYTFRVLLYIAGLNML. The Cytoplasmic portion of the chain corresponds to 99–128; it reads SAISIERCLSVMCPIWYRCHRPEHTSTVMC. Residues 129–149 traverse the membrane as a helical segment; that stretch reads AMIWVLSLLLCILYRYFCGFL. At 150–163 the chain is on the extracellular side; that stretch reads DTKYEDDYGCLAMN. The helical transmembrane segment at 164-184 threads the bilayer; that stretch reads FLTTAYLMFLFVVLCVSSLAL. The Cytoplasmic segment spans residues 185–203; sequence LARLFCGAGRMKLTRLYVT. The helical transmembrane segment at 204–224 threads the bilayer; sequence ITLTLLVFLLCGLPCGFYWFL. Topologically, residues 225-240 are extracellular; sequence LSKIKNVFSVFEFSLY. The helical transmembrane segment at 241–261 threads the bilayer; sequence LTSVVLTAINSCANPIIYFFV. Topologically, residues 262–301 are cytoplasmic; it reads GSFRHRLKHQTLKMVLQSALQDTPETPENMVEMSRNKAEL.

The protein belongs to the G-protein coupled receptor 1 family. Mas subfamily. As to expression, expressed in a subset of sensory neurons that includes nociceptors. Expressed in the subclass of non-peptidergic sensory neurons that are IB4(+) and VR1(-).

It is found in the cell membrane. In terms of biological role, orphan receptor. May be a receptor for RFamide-family neuropeptides such as NPFF and NPAF, which are analgesic in vivo. May regulate nociceptor function and/or development, including the sensation or modulation of pain. The polypeptide is Mas-related G-protein coupled receptor member A6 (Mrgpra6) (Mus musculus (Mouse)).